Reading from the N-terminus, the 207-residue chain is Thiamine-phosphate synthase (207 aa).

4-amino-2-methyl-5-(diphosphooxymethyl)pyrimidine contacts are provided by residues 36–40 and D68; that span reads QLRIK. Residues D69 and D88 each coordinate Mg(2+). Residue S106 participates in 4-amino-2-methyl-5-(diphosphooxymethyl)pyrimidine binding. 132-134 is a binding site for 2-[(2R,5Z)-2-carboxy-4-methylthiazol-5(2H)-ylidene]ethyl phosphate; the sequence is TKT. K135 serves as a coordination point for 4-amino-2-methyl-5-(diphosphooxymethyl)pyrimidine. 2-[(2R,5Z)-2-carboxy-4-methylthiazol-5(2H)-ylidene]ethyl phosphate contacts are provided by residues G162 and 182-183; that span reads VS.

This sequence belongs to the thiamine-phosphate synthase family. It depends on Mg(2+) as a cofactor.

The enzyme catalyses 2-[(2R,5Z)-2-carboxy-4-methylthiazol-5(2H)-ylidene]ethyl phosphate + 4-amino-2-methyl-5-(diphosphooxymethyl)pyrimidine + 2 H(+) = thiamine phosphate + CO2 + diphosphate. It carries out the reaction 2-(2-carboxy-4-methylthiazol-5-yl)ethyl phosphate + 4-amino-2-methyl-5-(diphosphooxymethyl)pyrimidine + 2 H(+) = thiamine phosphate + CO2 + diphosphate. The catalysed reaction is 4-methyl-5-(2-phosphooxyethyl)-thiazole + 4-amino-2-methyl-5-(diphosphooxymethyl)pyrimidine + H(+) = thiamine phosphate + diphosphate. Its pathway is cofactor biosynthesis; thiamine diphosphate biosynthesis; thiamine phosphate from 4-amino-2-methyl-5-diphosphomethylpyrimidine and 4-methyl-5-(2-phosphoethyl)-thiazole: step 1/1. In terms of biological role, condenses 4-methyl-5-(beta-hydroxyethyl)thiazole monophosphate (THZ-P) and 2-methyl-4-amino-5-hydroxymethyl pyrimidine pyrophosphate (HMP-PP) to form thiamine monophosphate (TMP). The chain is Thiamine-phosphate synthase from Pyrococcus abyssi (strain GE5 / Orsay).